The following is a 183-amino-acid chain: dCTP deaminase, dUMP-forming (183 aa).

Residues 99–104 (KSSIAR), aspartate 117, 125–127 (TLE), glutamine 146, tyrosine 159, lysine 166, and glutamine 170 contribute to the dCTP site. Glutamate 127 acts as the Proton donor/acceptor in catalysis.

Belongs to the dCTP deaminase family. In terms of assembly, homotrimer.

It carries out the reaction dCTP + 2 H2O = dUMP + NH4(+) + diphosphate. The protein operates within pyrimidine metabolism; dUMP biosynthesis; dUMP from dCTP: step 1/1. Functionally, bifunctional enzyme that catalyzes both the deamination of dCTP to dUTP and the hydrolysis of dUTP to dUMP without releasing the toxic dUTP intermediate. This chain is dCTP deaminase, dUMP-forming, found in Methanoregula boonei (strain DSM 21154 / JCM 14090 / 6A8).